A 179-amino-acid polypeptide reads, in one-letter code: Pyridoxal 5'-phosphate synthase subunit PdxT (179 aa).

Position 48–50 (48–50 (GES)) interacts with L-glutamine. The active-site Nucleophile is the cysteine 79. L-glutamine is bound by residues arginine 101 and 127–128 (IR). Catalysis depends on charge relay system residues histidine 163 and glutamate 165.

This sequence belongs to the glutaminase PdxT/SNO family. In terms of assembly, in the presence of PdxS, forms a dodecamer of heterodimers. Only shows activity in the heterodimer.

It catalyses the reaction aldehydo-D-ribose 5-phosphate + D-glyceraldehyde 3-phosphate + L-glutamine = pyridoxal 5'-phosphate + L-glutamate + phosphate + 3 H2O + H(+). It carries out the reaction L-glutamine + H2O = L-glutamate + NH4(+). It participates in cofactor biosynthesis; pyridoxal 5'-phosphate biosynthesis. Functionally, catalyzes the hydrolysis of glutamine to glutamate and ammonia as part of the biosynthesis of pyridoxal 5'-phosphate. The resulting ammonia molecule is channeled to the active site of PdxS. The polypeptide is Pyridoxal 5'-phosphate synthase subunit PdxT (Francisella philomiragia subsp. philomiragia (strain ATCC 25017 / CCUG 19701 / FSC 153 / O#319-036)).